The following is a 419-amino-acid chain: D-mannonate dehydratase (419 aa).

Substrate contacts are provided by Asn54 and His139. The Proton donor/acceptor role is filled by Tyr176. Asp227 contributes to the Mg(2+) binding site. His229 functions as the Proton donor/acceptor in the catalytic mechanism. The Mg(2+) site is built by Glu253 and Glu279. Substrate contacts are provided by Glu279, Arg300, His329, Asp333, and Glu356.

Belongs to the mandelate racemase/muconate lactonizing enzyme family. GalD subfamily. It depends on Mg(2+) as a cofactor.

It carries out the reaction D-mannonate = 2-dehydro-3-deoxy-D-gluconate + H2O. It participates in carbohydrate metabolism; pentose and glucuronate interconversion. Its function is as follows. Catalyzes the dehydration of D-mannonate. Has no detectable activity with a panel of 70 other acid sugars (in vitro). The polypeptide is D-mannonate dehydratase (Xanthomonas oryzae pv. oryzicola (strain BLS256)).